Consider the following 872-residue polypeptide: Alanine--tRNA ligase (872 aa).

Positions 567, 571, 669, and 673 each coordinate Zn(2+).

The protein belongs to the class-II aminoacyl-tRNA synthetase family. The cofactor is Zn(2+).

The protein localises to the cytoplasm. It carries out the reaction tRNA(Ala) + L-alanine + ATP = L-alanyl-tRNA(Ala) + AMP + diphosphate. Its function is as follows. Catalyzes the attachment of alanine to tRNA(Ala) in a two-step reaction: alanine is first activated by ATP to form Ala-AMP and then transferred to the acceptor end of tRNA(Ala). Also edits incorrectly charged Ser-tRNA(Ala) and Gly-tRNA(Ala) via its editing domain. The polypeptide is Alanine--tRNA ligase (Streptococcus pyogenes serotype M1).